A 634-amino-acid chain; its full sequence is Glutathione S-transferase C-terminal domain-containing protein (634 aa).

The 203-residue stretch at 131–333 (LGFKKTCLKA…QEVPKVKTAA (203 aa)) folds into the GST C-terminal domain. Residues 189–233 (RVHNDDKLRRQKLKQQKAAGSEPPSGKGKAKSKASAQKTPKDLAA) form a disordered region. Residues 204 to 226 (QKAAGSEPPSGKGKAKSKASAQK) are compositionally biased toward low complexity.

This sequence belongs to the GSTCD family.

It is found in the cytoplasm. In Mus musculus (Mouse), this protein is Glutathione S-transferase C-terminal domain-containing protein (Gstcd).